A 101-amino-acid polypeptide reads, in one-letter code: MKMERLERATIEAEMAGLAGWALNDAASSISKTFKFANFVEAFGFMTEAAIRAEKLNHHPEWFNVYSRVDVTLNTHDAGGLTELDFKLAKAMEKAAARRGV.

Belongs to the pterin-4-alpha-carbinolamine dehydratase family.

The catalysed reaction is (4aS,6R)-4a-hydroxy-L-erythro-5,6,7,8-tetrahydrobiopterin = (6R)-L-erythro-6,7-dihydrobiopterin + H2O. The polypeptide is Putative pterin-4-alpha-carbinolamine dehydratase (Rhizobium leguminosarum bv. trifolii (strain WSM2304)).